A 122-amino-acid chain; its full sequence is UPF0102 protein CTC_01256 (122 aa).

It belongs to the UPF0102 family.

The sequence is that of UPF0102 protein CTC_01256 from Clostridium tetani (strain Massachusetts / E88).